We begin with the raw amino-acid sequence, 935 residues long: Isoleucine--tRNA ligase (935 aa).

A 'HIGH' region motif is present at residues 58–68; sequence PYANGSIHVGH. E558 is a binding site for L-isoleucyl-5'-AMP. The 'KMSKS' region motif lies at 599-603; that stretch reads KMSKS. An ATP-binding site is contributed by K602. 4 residues coordinate Zn(2+): C897, C900, C917, and C920.

It belongs to the class-I aminoacyl-tRNA synthetase family. IleS type 1 subfamily. As to quaternary structure, monomer. The cofactor is Zn(2+).

Its subcellular location is the cytoplasm. The catalysed reaction is tRNA(Ile) + L-isoleucine + ATP = L-isoleucyl-tRNA(Ile) + AMP + diphosphate. Its function is as follows. Catalyzes the attachment of isoleucine to tRNA(Ile). As IleRS can inadvertently accommodate and process structurally similar amino acids such as valine, to avoid such errors it has two additional distinct tRNA(Ile)-dependent editing activities. One activity is designated as 'pretransfer' editing and involves the hydrolysis of activated Val-AMP. The other activity is designated 'posttransfer' editing and involves deacylation of mischarged Val-tRNA(Ile). This is Isoleucine--tRNA ligase from Francisella tularensis subsp. mediasiatica (strain FSC147).